Here is a 1588-residue protein sequence, read N- to C-terminus: MNKIFKVIWNPATGNYTVTSETAKSRGKKSGRSKLLISALVAGGMLSSFGALANAGNDNGQGVDYGSGSAGDGWVAIGKGAKANTFMNTSGSSTAVGYDAIAEGQYSSAIGSKTHAIGGASMAFGVSAISEGDRSIALGASSYSLGQYSMALGRYSKALGKLSIAMGDSSKAEGANAIALGNATKATEIMSIALGDTANASKAYSMALGASSVASEENAIAIGAETEAAENATAIGNNAKAKGTNSMAMGFGSLADKVNTIALGNGSQALADNAIAIGQGNKADGVDAIALGNGSQSRGLNTIALGTASNATGDKSLALGSNSSANGINSVALGADSIADLDNTVSVGNSSLKRKIVNVKNGAIKSDSYDAINGSQLYAISDSVAKRLGGGAAVDVDDGTVTAPTYNLKNGSKNNVGAALAVLDENTLQWDQTKGKYSAAHGTSSPTASVITDVADGTISASSKDAVNGSQLKATNDDVEANTANIATNTSNIATNTANIATNTTNITNLTDSVGDLQADALLWNETKKAFSAAHGQDTTSKITNVKDADLTADSTDAVNGSQLKTTNDAVATNTTNIANNTSNIATNTTNISNLTETVTNLGEDALKWDKDNGVFTAAHGTETTSKITNVKDGDLTTGSTDAVNGSQLKTTNDAVATNTTNIATNTTNISNLTETVTNLGEDALKWDKDNGVFTAAHGNNTASKITNILDGTVTATSSDAINGSQLYDLSSNIATYFGGNASVNTDGVFTGPTYKIGETNYYNVGDALAAINSSFSTSLGDALLWDATAGKFSAKHGTNGDASVITDVADGEISDSSSDAVNGSQLHGVSSYVVDALGGGAEVNADGTITAPTYTIANADYDNVGDALNAIDTTLDDALLWDADAGENGAFSAAHGKDKTASVITNVANGAISAASSDAINGSQLYTTNKYIADALGGDAEVNADGTITAPTYTIANAEYNNVGDALDALDDNALLWDETANGGAGAYNASHDGKASIITNVANGSISEDSTDAVNGSQLNATNMMIEQNTQIINQLAGNTDATYIQENGAGINYVRTNDDGLAFNDASAQGVGATAIGYNSVAKGDSSVAIGQGSYSDVDTGIALGSSSVSSRVIAKGSRDTSITENGVVIGYDTTDGELLGALSIGDDGKYRQIINVADGSEAHDAVTVRQLQNAIGAVATTPTKYFHANSTEEDSLAVGTDSLAMGAKTIVNGDKGIGIGYGAYVDANALNGIAIGSNAQVIHVNSIAIGNGSTTTRGAQTNYTAYNMDAPQNSVGEFSVGSADGQRQITNVAAGSADTDAVNVGQLKVTDAQVSQNTQSITNLDNRVTNLDSRVTNIENGIGDIVTTGSTKYFKTNTDGVDASAQGKDSVAIGSGSIAAADNSVALGTGSVATEENTISVGSSTNQRRITNVAAGKNATDAVNVAQLKSSEAGGVRYDTKADGSIDYSNITLGGGNGGTTRISNVSAGVNNNDVVNYAQLKQSVQETKQYTDQRMVEMDNKLSKTESKLSGGIASAMAMTGLPQAYTPGASMASIGGGTYNGESAVALGVSMVSANGRWVYKLQGSTNSQGEYSAALGAGIQW.

Positions Met-1–Ala-53 are cleaved as a signal peptide. The interval Asn-54–Arg-1499 is surface exposed passenger domain. The segment at Met-1500 to Trp-1588 is translocator domain. The next 4 membrane-spanning stretches (beta stranded) occupy residues Gly-1534 to Thr-1544, Glu-1548 to Val-1558, Lys-1567 to Asn-1573, and Glu-1577 to Trp-1588.

Belongs to the autotransporter-2 (AT-2) (TC 1.B.40) family. In terms of assembly, homotrimer.

The protein localises to the cell surface. It localises to the cell outer membrane. Its function is as follows. Mediates aggregation, biofilm formation and adhesion to a range of extracellular matrix (ECM) proteins, such as fibronectin, fibrinogen, laminin and collagen types I, II, III, and V. Mediates adhesion to intestinal epithelial cells. In Escherichia coli O157:H7, this protein is Autotransporter adhesin EhaG.